The primary structure comprises 138 residues: MVDYFDYNSLLTRAREQLPEEVFKDVRFEIPSADSFVEGNRTIIKNFKDIAKFMERDPQEFAKYVMKELGTAGDMEGVRLILQGKFGWRMVNEKIQNYVNEYVLCPECGKPDTKIVKEGRIHFLKCTACGAMKPVKTL.

This sequence belongs to the eIF-2-beta/eIF-5 family. In terms of assembly, heterotrimer composed of an alpha, a beta and a gamma chain.

In terms of biological role, eIF-2 functions in the early steps of protein synthesis by forming a ternary complex with GTP and initiator tRNA. The protein is Translation initiation factor 2 subunit beta of Methanococcus maripaludis (strain C6 / ATCC BAA-1332).